A 536-amino-acid chain; its full sequence is Cytochrome c oxidase subunit 1 (536 aa).

A helical membrane pass occupies residues 19-39 (IGMTYLGFGMLSAMMGTGMSV). A Ca(2+)-binding site is contributed by E44. Position 67 (H67) interacts with Fe(II)-heme a. 6 helical membrane passes run 69–89 (LLMM…NFFL), 103–123 (LNNI…CSVL), 152–172 (AMFA…NFMV), 188–208 (PLFA…LPVL), 240–260 (LFWF…FGVM), and 273–293 (FGEM…FLVW). H246 is a binding site for Cu cation. A cross-link (1'-histidyl-3'-tyrosine (His-Tyr)) is located at residues 246–250 (HPEVY). Y250 contacts O2. Cu cation contacts are provided by H295 and H296. A run of 2 helical transmembrane segments spans residues 315–335 (MVIA…IYGG) and 341–361 (VPML…LTGV). 2 residues coordinate Mg(2+): H373 and D374. Position 381 (H381) interacts with heme a3. H383 contributes to the Fe(II)-heme a binding site. 2 helical membrane-spanning segments follow: residues 388 to 408 (MGAL…MFGL) and 418 to 438 (HFWL…FLGL). Ca(2+) is bound at residue P446. Residues 461-481 (MGSAMSVMSVLVGLKSVLVQL) traverse the membrane as a helical segment.

Belongs to the heme-copper respiratory oxidase family. As to quaternary structure, component of the cytochrome c oxidase (complex IV, CIV), a multisubunit enzyme composed of a catalytic core of 3 subunits and several supernumerary subunits. The complex exists as a monomer or a dimer and forms supercomplexes (SCs) in the inner mitochondrial membrane with ubiquinol-cytochrome c oxidoreductase (cytochrome b-c1 complex, complex III, CIII). Heme serves as cofactor. It depends on Cu cation as a cofactor.

The protein localises to the mitochondrion inner membrane. It catalyses the reaction 4 Fe(II)-[cytochrome c] + O2 + 8 H(+)(in) = 4 Fe(III)-[cytochrome c] + 2 H2O + 4 H(+)(out). Its pathway is energy metabolism; oxidative phosphorylation. Functionally, component of the cytochrome c oxidase, the last enzyme in the mitochondrial electron transport chain which drives oxidative phosphorylation. The respiratory chain contains 3 multisubunit complexes succinate dehydrogenase (complex II, CII), ubiquinol-cytochrome c oxidoreductase (cytochrome b-c1 complex, complex III, CIII) and cytochrome c oxidase (complex IV, CIV), that cooperate to transfer electrons derived from NADH and succinate to molecular oxygen, creating an electrochemical gradient over the inner membrane that drives transmembrane transport and the ATP synthase. Cytochrome c oxidase is the component of the respiratory chain that catalyzes the reduction of oxygen to water. Electrons originating from reduced cytochrome c in the intermembrane space (IMS) are transferred via the dinuclear copper A center (CU(A)) of subunit 2 and heme A of subunit 1 to the active site in subunit 1, a binuclear center (BNC) formed by heme A3 and copper B (CU(B)). The BNC reduces molecular oxygen to 2 water molecules using 4 electrons from cytochrome c in the IMS and 4 protons from the mitochondrial matrix. This is Cytochrome c oxidase subunit 1 (COX1) from Debaryomyces hansenii (strain ATCC 36239 / CBS 767 / BCRC 21394 / JCM 1990 / NBRC 0083 / IGC 2968) (Yeast).